A 119-amino-acid chain; its full sequence is Large ribosomal subunit protein bL20 (119 aa).

This sequence belongs to the bacterial ribosomal protein bL20 family.

In terms of biological role, binds directly to 23S ribosomal RNA and is necessary for the in vitro assembly process of the 50S ribosomal subunit. It is not involved in the protein synthesizing functions of that subunit. The protein is Large ribosomal subunit protein bL20 of Rhodopseudomonas palustris (strain HaA2).